The chain runs to 294 residues: 4-hydroxy-tetrahydrodipicolinate synthase (294 aa).

Residue Thr45 participates in pyruvate binding. The active-site Proton donor/acceptor is the Tyr133. Lys162 (schiff-base intermediate with substrate) is an active-site residue. Ile204 contacts pyruvate.

This sequence belongs to the DapA family. Homotetramer; dimer of dimers.

The protein resides in the cytoplasm. It catalyses the reaction L-aspartate 4-semialdehyde + pyruvate = (2S,4S)-4-hydroxy-2,3,4,5-tetrahydrodipicolinate + H2O + H(+). Its pathway is amino-acid biosynthesis; L-lysine biosynthesis via DAP pathway; (S)-tetrahydrodipicolinate from L-aspartate: step 3/4. Functionally, catalyzes the condensation of (S)-aspartate-beta-semialdehyde [(S)-ASA] and pyruvate to 4-hydroxy-tetrahydrodipicolinate (HTPA). The polypeptide is 4-hydroxy-tetrahydrodipicolinate synthase (Bartonella quintana (strain Toulouse) (Rochalimaea quintana)).